We begin with the raw amino-acid sequence, 249 residues long: 2,3-bisphosphoglycerate-dependent phosphoglycerate mutase (249 aa).

Substrate contacts are provided by residues R8–N15, T21–G22, R60, E87–Y90, K98, R114–R115, and G183–N184. Catalysis depends on H9, which acts as the Tele-phosphohistidine intermediate. The active-site Proton donor/acceptor is E87.

It belongs to the phosphoglycerate mutase family. BPG-dependent PGAM subfamily.

The enzyme catalyses (2R)-2-phosphoglycerate = (2R)-3-phosphoglycerate. The protein operates within carbohydrate degradation; glycolysis; pyruvate from D-glyceraldehyde 3-phosphate: step 3/5. In terms of biological role, catalyzes the interconversion of 2-phosphoglycerate and 3-phosphoglycerate. In Pelodictyon phaeoclathratiforme (strain DSM 5477 / BU-1), this protein is 2,3-bisphosphoglycerate-dependent phosphoglycerate mutase.